The primary structure comprises 205 residues: Thymidine kinase (205 aa).

ATP contacts are provided by residues Ser9–Ser16 and Asp87–Gln90. The Proton acceptor role is filled by Glu88. Residues Cys145, Cys147, Cys182, and His185 each coordinate Zn(2+).

It belongs to the thymidine kinase family. Homotetramer.

It localises to the cytoplasm. It carries out the reaction thymidine + ATP = dTMP + ADP + H(+). Allosteric enzyme which is feedback inhibited by dTTP and activated by a number of dNDP and dNTP. Its function is as follows. Phosphorylates both thymidine and deoxyuridine. The sequence is that of Thymidine kinase from Escherichia coli O157:H7.